Reading from the N-terminus, the 328-residue chain is Ribosomal RNA small subunit methyltransferase C (328 aa).

The protein belongs to the methyltransferase superfamily. RsmC family. Monomer.

It localises to the cytoplasm. The catalysed reaction is guanosine(1207) in 16S rRNA + S-adenosyl-L-methionine = N(2)-methylguanosine(1207) in 16S rRNA + S-adenosyl-L-homocysteine + H(+). Specifically methylates the guanine in position 1207 of 16S rRNA in the 30S particle. The polypeptide is Ribosomal RNA small subunit methyltransferase C (Pasteurella multocida (strain Pm70)).